Reading from the N-terminus, the 349-residue chain is Homeobox-leucine zipper protein HOX5 (349 aa).

The segment at residues Ala83–Gln142 is a DNA-binding region (homeobox). A leucine-zipper region spans residues Lys141–Lys185. Positions Lys181–Ala253 are disordered. The segment covering Ser188–Ala198 has biased composition (low complexity).

This sequence belongs to the HD-ZIP homeobox family. Class I subfamily. Homodimer. May form a heterodimer with HOX4. As to expression, expressed in seedlings, roots, leaves, nodes, internodes, flowers and embryo.

It localises to the nucleus. Probable transcription activator that binds to the DNA sequence 5'-CAAT[AT]ATTG-3'. This is Homeobox-leucine zipper protein HOX5 (HOX5) from Oryza sativa subsp. japonica (Rice).